The chain runs to 207 residues: ATP-dependent Clp protease proteolytic subunit (207 aa).

The active-site Nucleophile is Ser111. His136 is a catalytic residue.

It belongs to the peptidase S14 family. In terms of assembly, fourteen ClpP subunits assemble into 2 heptameric rings which stack back to back to give a disk-like structure with a central cavity, resembling the structure of eukaryotic proteasomes.

It localises to the cytoplasm. The enzyme catalyses Hydrolysis of proteins to small peptides in the presence of ATP and magnesium. alpha-casein is the usual test substrate. In the absence of ATP, only oligopeptides shorter than five residues are hydrolyzed (such as succinyl-Leu-Tyr-|-NHMec, and Leu-Tyr-Leu-|-Tyr-Trp, in which cleavage of the -Tyr-|-Leu- and -Tyr-|-Trp bonds also occurs).. Cleaves peptides in various proteins in a process that requires ATP hydrolysis. Has a chymotrypsin-like activity. Plays a major role in the degradation of misfolded proteins. This Aliivibrio fischeri (strain ATCC 700601 / ES114) (Vibrio fischeri) protein is ATP-dependent Clp protease proteolytic subunit.